The primary structure comprises 225 residues: Cytidylate kinase (225 aa).

12-20 (GPSGAGKGT) lines the ATP pocket.

The protein belongs to the cytidylate kinase family. Type 1 subfamily.

The protein localises to the cytoplasm. It catalyses the reaction CMP + ATP = CDP + ADP. It carries out the reaction dCMP + ATP = dCDP + ADP. This chain is Cytidylate kinase, found in Stenotrophomonas maltophilia (strain R551-3).